We begin with the raw amino-acid sequence, 89 residues long: MDTILLTGLFAAFFTTFAFAPQSIKTIRTRNTEGISVVMYIMFLTGVISWIAYGIMRSDFAVLIANIVTLFLAAPVLVITLINRRKKHV.

Helical transmembrane passes span 4–27 (ILLT…IKTI), 35–55 (ISVV…AYGI), and 60–82 (FAVL…ITLI). The region spanning 7–59 (TGLFAAFFTTFAFAPQSIKTIRTRNTEGISVVMYIMFLTGVISWIAYGIMRSD) is the PQ-loop domain.

In terms of assembly, homodimer.

The protein resides in the cell membrane. In terms of biological role, the homodimer mediates transmembrane sugar transport down a concentration gradient. Transport is probably effected by rocking-type movements, where a cargo-binding cavity opens first on one and then on the other side of the membrane. The sequence is that of Sugar transporter SemiSWEET from Escherichia coli (strain UMEA 3162-1).